The primary structure comprises 429 residues: Adenylosuccinate synthetase (429 aa).

Residues Gly-13–Lys-19 and Gly-41–Thr-43 each bind GTP. The active-site Proton acceptor is Asp-14. Residues Asp-14 and Gly-41 each coordinate Mg(2+). IMP-binding positions include Asp-14–Lys-17, Asn-39–His-42, Thr-130, Arg-144, Gln-224, Thr-239, and Arg-303. The active-site Proton donor is the His-42. Ala-299–Arg-305 provides a ligand contact to substrate. GTP is bound by residues Arg-305, Lys-331–Asp-333, and Ser-412–Gly-414.

Belongs to the adenylosuccinate synthetase family. Homodimer. The cofactor is Mg(2+).

Its subcellular location is the cytoplasm. The catalysed reaction is IMP + L-aspartate + GTP = N(6)-(1,2-dicarboxyethyl)-AMP + GDP + phosphate + 2 H(+). It functions in the pathway purine metabolism; AMP biosynthesis via de novo pathway; AMP from IMP: step 1/2. Plays an important role in the de novo pathway of purine nucleotide biosynthesis. Catalyzes the first committed step in the biosynthesis of AMP from IMP. The chain is Adenylosuccinate synthetase from Psychrobacter arcticus (strain DSM 17307 / VKM B-2377 / 273-4).